Here is a 159-residue protein sequence, read N- to C-terminus: Protein US8.5 (159 aa).

The disordered stretch occupies residues 27-107 (SSQPLDPEGP…APSPHPRPPG (81 aa)). A compositionally biased stretch (basic and acidic residues) spans 80–91 (SDERGPPRHDRP).

Belongs to the HHV-1 US8.5 protein family. In terms of processing, phosphorylated.

It localises to the host nucleus. The protein resides in the host nucleolus. The polypeptide is Protein US8.5 (Human herpesvirus 1 (strain 17) (HHV-1)).